The sequence spans 156 residues: Ribosomal RNA large subunit methyltransferase H (156 aa).

S-adenosyl-L-methionine-binding positions include L73, G104, and 123–128 (ISSMTL).

The protein belongs to the RNA methyltransferase RlmH family. As to quaternary structure, homodimer.

The protein resides in the cytoplasm. The catalysed reaction is pseudouridine(1915) in 23S rRNA + S-adenosyl-L-methionine = N(3)-methylpseudouridine(1915) in 23S rRNA + S-adenosyl-L-homocysteine + H(+). In terms of biological role, specifically methylates the pseudouridine at position 1915 (m3Psi1915) in 23S rRNA. This chain is Ribosomal RNA large subunit methyltransferase H, found in Burkholderia ambifaria (strain ATCC BAA-244 / DSM 16087 / CCUG 44356 / LMG 19182 / AMMD) (Burkholderia cepacia (strain AMMD)).